Here is a 491-residue protein sequence, read N- to C-terminus: CTD small phosphatase-like protein 1 (491 aa).

Disordered regions lie at residues 1–53 (MTYA…SLDY), 140–198 (KLTK…TARR), 221–249 (KIQS…TGPP), and 261–282 (TVTG…DGVT). Over residues 17–26 (VPPPRTPVGP) the composition is skewed to pro residues. Positions 37 to 49 (SASQPLQPKNGAN) are enriched in polar residues. Basic and acidic residues predominate over residues 141-156 (LTKDEKNGGKMNRDGG). The segment covering 176–187 (ASTPLNSFSANA) has biased composition (polar residues). Residues 223 to 237 (QSSQRTNSTNNNHQN) are compositionally biased toward low complexity. 2 stretches are compositionally biased toward polar residues: residues 238-249 (GRPSTPTNTGPP) and 264-276 (GLPT…QQNG). The FCP1 homology domain maps to 307 to 465 (QDSNKKCLVI…LDILPSLEHL (159 aa)). Catalysis depends on Asp-317, which acts as the 4-aspartylphosphate intermediate. Residues Asp-317, Asp-319, and Asn-428 each contribute to the Mg(2+) site. Asp-319 (proton donor) is an active-site residue.

As to quaternary structure, may interact (via phosphatase domain) with cpna-1. Isoform a and isoform b may interact with lim-9 (via LIM zinc-binding domain). Isoform a and isoform b may interact (via FCP1 homology domain) with unc-89 (via fibronectin type-III domain 1, Ig-like C2-type domain 48/49 and protein kinase domain 1 or Ig-like C2-type domain 50, fibronectin type-III domain 2 and protein kinase domain 2); the interaction may act as a molecular bridge to bring two unc-89 molecules together or to stabilize a loop between the 2 protein kinase domains. Mg(2+) is required as a cofactor. Expressed in pharyngeal, vulval and body wall muscles.

It localises to the cytoplasm. It is found in the myofibril. The protein resides in the sarcomere. Its subcellular location is the m line. The catalysed reaction is O-phospho-L-seryl-[protein] + H2O = L-seryl-[protein] + phosphate. It catalyses the reaction O-phospho-L-threonyl-[protein] + H2O = L-threonyl-[protein] + phosphate. With respect to regulation, inhibited by beryllium trifluoride (BeF(3-)) and tetrafluoroaluminate (AlF(4-)) but not by sodium fluoride (NaF) or sodium orthovanadate (Na3VO4). Phosphatase which may play a role in the egg laying muscles. In Caenorhabditis elegans, this protein is CTD small phosphatase-like protein 1.